A 164-amino-acid chain; its full sequence is Ribosome maturation factor RimM (164 aa).

The 72-residue stretch at lysine 90–tryptophan 161 folds into the PRC barrel domain.

The protein belongs to the RimM family. Binds ribosomal protein uS19.

Its subcellular location is the cytoplasm. An accessory protein needed during the final step in the assembly of 30S ribosomal subunit, possibly for assembly of the head region. Essential for efficient processing of 16S rRNA. May be needed both before and after RbfA during the maturation of 16S rRNA. It has affinity for free ribosomal 30S subunits but not for 70S ribosomes. The chain is Ribosome maturation factor RimM from Clostridium botulinum (strain Hall / ATCC 3502 / NCTC 13319 / Type A).